The following is a 626-amino-acid chain: Cysteine desulfurase (626 aa).

2 disordered regions span residues 1–21 and 41–64; these read MTNT…SDPF and AGVS…PTTS. Residues 1–225 are cargo-loading domain; it reads MTNTVPSVPA…AGAVGFDIHQ (225 aa). The tract at residues 226–626 is cysteine desulfurase domain; it reads VRRDFPILQE…RRIQTGSLAL (401 aa). Lysine 444 bears the N6-(pyridoxal phosphate)lysine mark. Cysteine 582 acts as the Cysteine persulfide intermediate in catalysis.

It belongs to the class-V pyridoxal-phosphate-dependent aminotransferase family. Csd subfamily. As to quaternary structure, there are 1-2 copies of this protein in each type 2A encapsulin shell. It depends on pyridoxal 5'-phosphate as a cofactor.

The protein localises to the encapsulin nanocompartment. It carries out the reaction (sulfur carrier)-H + L-cysteine = (sulfur carrier)-SH + L-alanine. Its activity is regulated as follows. Encapsulated enzyme is 7-fold more active than encapsulated enzyme. Its function is as follows. Cargo protein of a type 2A encapsulin nanocompartment probably involved in sulfur metabolism. Cysteine desulfurases mobilize the sulfur from L-cysteine to yield L-alanine, an essential step in sulfur metabolism for biosynthesis of a variety of sulfur-containing biomolecules. The chain is Cysteine desulfurase from Synechococcus elongatus (strain ATCC 33912 / PCC 7942 / FACHB-805) (Anacystis nidulans R2).